Consider the following 869-residue polypeptide: Phosphatidylethanolamine N-methyltransferase (869 aa).

Ser-2 is modified (N-acetylserine). Over 2–55 (SSCKTTLSEMVGSVTKDRGTINVEARTRSSNVTFKPPVTHDMVRSLFDPTLKKS) the chain is Lumenal. Residues 56 to 76 (LLEKCIALAIISNFFICYWVF) form a helical membrane-spanning segment. Residues 77 to 86 (QRFGLQFTKY) are Cytoplasmic-facing. A helical membrane pass occupies residues 87 to 107 (FFLVQYLFWRIAYNLGIGLVL). The Lumenal portion of the chain corresponds to 108-187 (HYQSHYETLT…EINVWLIFRQ (80 aa)). Residues 188-208 (FVDLILMQDFVTYIIYVYLSI) traverse the membrane as a helical segment. The Cytoplasmic portion of the chain corresponds to 209-212 (PYSW). The helical transmembrane segment at 213-233 (VQIFNWRSLLGVILILFNIWV) threads the bilayer. Over 234-258 (KLDAHRVVKDYAWYWGDFFFLEESE) the chain is Lumenal. Residues 259 to 279 (LIFDGVFNISPHPMYSIGYLG) traverse the membrane as a helical segment. At 280-291 (YYGLSLICNDYK) the chain is on the cytoplasmic side. A helical transmembrane segment spans residues 292 to 310 (VLLVSVFGHYSQFLFLKYV). Topologically, residues 311 to 362 (ENPHIERTYGDGTDSDSQMNSRIDDLISKENYDYSRPLINMGLSFNNFNKLR) are lumenal. The chain crosses the membrane as a helical span at residues 363–383 (FTDYFTIGTVAALMLGTIMNA). Residues 384–389 (RFINLN) are Cytoplasmic-facing. A helical transmembrane segment spans residues 390–410 (YLFITVFVTKLVSWLFISTIL). Residues 411–439 (YKQSQSKWFTRLFLENGYTQVYSYEQWQF) lie on the Lumenal side of the membrane. The helical transmembrane segment at 440 to 460 (IYNYYLVLTYTLMIIHTGLQI) threads the bilayer. The Cytoplasmic portion of the chain corresponds to 461–463 (WSN). Residues 464-484 (FSNINNSQLIFGLILVALQTW) form a helical membrane-spanning segment. The Lumenal segment spans residues 485 to 534 (CDKETRLAISDFGWFYGDFFLSNYISTRKLTSQGIYRYLNHPEAVLGVVG). A helical membrane pass occupies residues 535-555 (VWGTVLMTNFAVTNIILAVLW). Topologically, residues 556-869 (TLTNFILVKF…DIKQTLDSLA (314 aa)) are cytoplasmic.

Belongs to the class VI-like SAM-binding methyltransferase superfamily. CHO2 family.

Its subcellular location is the endoplasmic reticulum membrane. The catalysed reaction is a 1,2-diacyl-sn-glycero-3-phosphoethanolamine + S-adenosyl-L-methionine = a 1,2-diacyl-sn-glycero-3-phospho-N-methylethanolamine + S-adenosyl-L-homocysteine + H(+). Its pathway is phospholipid metabolism; phosphatidylcholine biosynthesis. Functionally, catalyzes the first step of the methylation pathway of phosphatidylcholine biosynthesis, the SAM-dependent methylation of phosphatidylethanolamine (PE) to phosphatidylmonomethylethanolamine (PMME). Preferentially converts di-C16:1 substrates. This chain is Phosphatidylethanolamine N-methyltransferase, found in Saccharomyces cerevisiae (strain ATCC 204508 / S288c) (Baker's yeast).